The following is a 482-amino-acid chain: Abscisic acid 8'-hydroxylase 2 (482 aa).

Residues 20 to 40 (PALITLTIVVVVVVLLFKWWL) form a helical membrane-spanning segment. Residue cysteine 431 coordinates heme.

It belongs to the cytochrome P450 family. The cofactor is heme. Mainly expressed in dry seeds. Lower expression in rosette leaves, flowers, siliques and stems. Not expressed in roots. Expressed in both endosperm and vascular tissues of embryo during the seed development and in cortex and endodermis in germinating embryo.

The protein localises to the membrane. The catalysed reaction is 2-cis-(+)-abscisate + reduced [NADPH--hemoprotein reductase] + O2 = (+)-8'-hydroxyabscisate + oxidized [NADPH--hemoprotein reductase] + H2O + H(+). Its pathway is plant hormone degradation; abscisic acid degradation. Its function is as follows. Involved in the oxidative degradation of abscisic acid, but not in the isomerization of the produced 8'-hydroxyabscisic acid (8'-OH-ABA) to (-)-phaseic acid (PA). Involved in the control of seed dormancy and germination. The polypeptide is Abscisic acid 8'-hydroxylase 2 (CYP707A2) (Arabidopsis thaliana (Mouse-ear cress)).